A 339-amino-acid polypeptide reads, in one-letter code: RNA polymerase principal sigma factor HrdC (339 aa).

Low complexity predominate over residues 1-10 (MAPTARTPTA). Disordered regions lie at residues 1-37 (MAPT…EEPD) and 71-101 (REEL…DGQE). Positions 91–101 (TLEETVHDGQE) are enriched in basic and acidic residues. The Polymerase core binding signature appears at 130–143 (DVIQEGNLGLIRAV). Positions 300–319 (LQQVAQHVGLTRERVRQLEK) form a DNA-binding region, H-T-H motif.

The protein belongs to the sigma-70 factor family. In terms of assembly, interacts transiently with the RNA polymerase catalytic core.

Functionally, sigma factors are initiation factors that promote the attachment of RNA polymerase to specific initiation sites and are then released. The chain is RNA polymerase principal sigma factor HrdC (hrdC) from Streptomyces coelicolor (strain ATCC BAA-471 / A3(2) / M145).